Here is a 481-residue protein sequence, read N- to C-terminus: Cytochrome P450 monooxygenase dpfgJ (481 aa).

A helical transmembrane segment spans residues 23-43 (LVFTQAAVIGSILFVFLLGLY). The N-linked (GlcNAc...) asparagine glycan is linked to Asn-338. Cys-427 lines the heme pocket.

Belongs to the cytochrome P450 family. The cofactor is heme.

The protein resides in the membrane. Its pathway is secondary metabolite biosynthesis; terpenoid biosynthesis. Functionally, cytochrome P450 monooxygenase; part of the gene cluster that mediates the biosynthesis of diterpenoid pyrones. The first step of the pathway is the synthesis of the alpha-pyrone moiety by the polyketide synthase dpfgA via condensation of one acetyl-CoA starter unit with 3 malonyl-CoA units and 2 methylations. The alpha-pyrone is then combined with geranylgeranyl pyrophosphate (GGPP) formed by the GGPP synthase dpfgD through the action of the prenyltransferase dpfgC to yield a linear alpha-pyrone diterpenoid. Subsequent steps in the diterpenoid pyrone biosynthetic pathway involve the decalin core formation, which is initiated by the epoxidation of the C10-C11 olefin by the FAD-dependent oxidoreductase dpfgE, and is followed by a cyclization cascade catalyzed by the terpene cyclase dpfgB. The short chain dehydrogenase/reductase dpfgG then oxidizes the 8S hydroxy group to a ketone and the short chain dehydrogenase/reductase dpfgH reduces the ketone to the 8R hydroxy group to yield higginsianin B. Higginsianin B is further methylated by the methyltransferase dpfgI to produce the intermediate named FDDP B. The cytochrome P450 monooxygenase dfgpJ then catalyzes a three-step oxidation at C-27 to generate a carboxylic acid as well as C-26 hydroxylation. Finally, methyltransferase dpfgK methylates the carboxylic acid generated by dpfgJ, yielding the final diterpenoid pyrones from the pathway which were named FDDP D and FDDP E. The chain is Cytochrome P450 monooxygenase dpfgJ from Gibberella zeae (strain ATCC MYA-4620 / CBS 123657 / FGSC 9075 / NRRL 31084 / PH-1) (Wheat head blight fungus).